Here is a 601-residue protein sequence, read N- to C-terminus: ATP-dependent lipid A-core flippase (601 aa).

Residues 28–328 (LLSVCGLIVY…LTRVNAEFQR (301 aa)) enclose the ABC transmembrane type-1 domain. 6 helical membrane passes run 32 to 52 (CGLI…GPFI), 81 to 101 (VLLM…FANF), 160 to 180 (ALIS…LMFY), 183 to 203 (WKLS…ITIV), 267 to 287 (AVSQ…VLYA), and 296 to 316 (DLTA…LQPI). The region spanning 360–597 (LRFDNVSFSY…GGMYAKLYQM (238 aa)) is the ABC transporter domain. An ATP-binding site is contributed by 394-401 (GRSGSGKS).

It belongs to the ABC transporter superfamily. Lipid exporter (TC 3.A.1.106) family. Homodimer.

Its subcellular location is the cell inner membrane. It catalyses the reaction ATP + H2O + lipid A-core oligosaccharideSide 1 = ADP + phosphate + lipid A-core oligosaccharideSide 2.. In terms of biological role, involved in lipopolysaccharide (LPS) biosynthesis. Translocates lipid A-core from the inner to the outer leaflet of the inner membrane. Transmembrane domains (TMD) form a pore in the inner membrane and the ATP-binding domain (NBD) is responsible for energy generation. This chain is ATP-dependent lipid A-core flippase, found in Shewanella sp. (strain MR-4).